A 255-amino-acid polypeptide reads, in one-letter code: Probable transcriptional regulatory protein PCC8801_2028 (255 aa).

The protein belongs to the TACO1 family.

The protein localises to the cytoplasm. The sequence is that of Probable transcriptional regulatory protein PCC8801_2028 from Rippkaea orientalis (strain PCC 8801 / RF-1) (Cyanothece sp. (strain PCC 8801)).